The primary structure comprises 201 residues: Large ribosomal subunit protein uL4 (201 aa).

The tract at residues 39-70 (GRQGTKAQKTRSEVSGGGKKPWRQKGTGRARA) is disordered.

The protein belongs to the universal ribosomal protein uL4 family. As to quaternary structure, part of the 50S ribosomal subunit.

Functionally, one of the primary rRNA binding proteins, this protein initially binds near the 5'-end of the 23S rRNA. It is important during the early stages of 50S assembly. It makes multiple contacts with different domains of the 23S rRNA in the assembled 50S subunit and ribosome. In terms of biological role, forms part of the polypeptide exit tunnel. The sequence is that of Large ribosomal subunit protein uL4 from Marinobacter nauticus (strain ATCC 700491 / DSM 11845 / VT8) (Marinobacter aquaeolei).